The sequence spans 310 residues: Thiamine-monophosphate kinase (310 aa).

Residues Asp26, Thr40, Ser41, and Asp42 each contribute to the Mg(2+) site. Asp49 contributes to the substrate binding site. Mg(2+) contacts are provided by Asp70 and Asp118. Residues 117–118 (GD) and Arg141 each bind ATP. Asp202 contributes to the Mg(2+) binding site. Ser204 provides a ligand contact to ATP. Asp205 contacts Mg(2+). 2 residues coordinate substrate: Glu251 and Trp299.

Belongs to the thiamine-monophosphate kinase family.

The catalysed reaction is thiamine phosphate + ATP = thiamine diphosphate + ADP. Its pathway is cofactor biosynthesis; thiamine diphosphate biosynthesis; thiamine diphosphate from thiamine phosphate: step 1/1. Catalyzes the ATP-dependent phosphorylation of thiamine-monophosphate (TMP) to form thiamine-pyrophosphate (TPP), the active form of vitamin B1. This chain is Thiamine-monophosphate kinase, found in Pyrococcus abyssi (strain GE5 / Orsay).